The sequence spans 131 residues: Snaclec A8 (131 aa).

3 disulfides stabilise this stretch: Cys2–Cys13, Cys30–Cys129, and Cys104–Cys121. One can recognise a C-type lectin domain in the interval 9–130; that stretch reads HEGHCYKVFN…CGQPYRFTCE (122 aa).

This sequence belongs to the snaclec family. As to quaternary structure, heterodimer; disulfide-linked. Expressed by the venom gland.

The protein localises to the secreted. In terms of biological role, interferes with one step of hemostasis (modulation of platelet aggregation, or coagulation cascade, for example). The protein is Snaclec A8 of Macrovipera lebetinus (Levantine viper).